The sequence spans 116 residues: Proline-rich protein 9 (116 aa).

This is Proline-rich protein 9 (PRR9) from Homo sapiens (Human).